We begin with the raw amino-acid sequence, 549 residues long: Protein wntless homolog (549 aa).

Positions 1-34 are cleaved as a signal peptide; it reads MAGGAVIENLSNRKLFVIFAGLLVIQIMFFLIGA. At 36 to 236 the chain is on the lumenal side; sequence YAPSPSSYME…RLIEIHQNGG (201 aa). The chain crosses the membrane as a helical span at residues 237-257; that stretch reads FTLVWLWTKTFMTPVVAICLW. The Cytoplasmic segment spans residues 258–275; it reads WYYNRINQLARNPLLLER. The chain crosses the membrane as a helical span at residues 276-296; it reads AILLLGLSLVILDFPIEWISL. Over 297-310 the chain is Lumenal; the sequence is TYRIPFLLLISDLR. Residues 311–331 traverse the membrane as a helical segment; it reads QGLFYTVLFSFWLIFAGEHLI. Residues 332-345 lie on the Cytoplasmic side of the membrane; sequence DDNTRNNLKSYRFN. The chain crosses the membrane as a helical span at residues 346–366; that stretch reads LSFIITASLGLLIYDLIERGI. Residues 367-383 are Lumenal-facing; the sequence is QLYDPFYSVWSSPTGSQ. The helical transmembrane segment at 384-404 threads the bilayer; the sequence is IAYFAIFISAISTVAYFIFLF. The Cytoplasmic portion of the chain corresponds to 405-439; it reads FKIARVWSTIKSKRSAQIYQTSENRRLKVEGVIYR. Residues 440–460 traverse the membrane as a helical segment; that stretch reads FKFLMLFTLLCSAFTIAAYFM. The Lumenal segment spans residues 461 to 483; it reads KQYGEAQLHGDEARDGFLTGSTS. A helical transmembrane segment spans residues 484–504; it reads AFFTGAFGMCNIYVLLLLAMY. At 505–549 the chain is on the cytoplasmic side; the sequence is APSHKHYRGASQLIDENDDDEIMEDPSNQHTESNAMTTFLKPSTD. Positions 524–549 are disordered; the sequence is DEIMEDPSNQHTESNAMTTFLKPSTD. Polar residues predominate over residues 530–549; the sequence is PSNQHTESNAMTTFLKPSTD.

Belongs to the wntless family. As to expression, expressed in the tail hypodermis, stomatointestinal muscle, the mesoblast cell M and its descendants, CAN neurons, the developing vulva, the pharynx and the pharyngeal intestinal valve.

It localises to the cell membrane. It is found in the early endosome membrane. Its subcellular location is the golgi apparatus membrane. The protein resides in the basal cell membrane. The protein localises to the late endosome membrane. Its function is as follows. Probable sorting receptor which regulates endocytosis and secretion of the wnt ligand egl-20. Recycling of mig-14 from the plasma membrane to the Golgi apparatus by the retromer complex is essential for its function. Its endosomal trafficking is regulated by its association with sorting nexin snx-3 on early endosomes and the mtm-6/mtm-9 myotubularin complex. Required in embryonic development for endoderm specification and the correct positioning and orientation of the mitotic spindles and division planes in blastomere cells. Functions during vulval development, playing a role in vulval precursor cell fate specification. During development, specifically regulates the migration of HSN neurons, the left Q neuroblast (QL) and its descendants and the distal tip cells of the gonads. Positioning of Q neuroblasts may be both dependent and independent of hox gene mab-5. Involved in establishing ALM and PLM neuronal cell polarity. This is Protein wntless homolog from Caenorhabditis elegans.